The chain runs to 965 residues: Collagen alpha-1(I) chain (965 aa).

The segment covering 1–21 (SVPGPMGPSGPRGLPGPPGPG) has biased composition (pro residues). The segment at 1 to 965 (SVPGPMGPSG…PGPPGPPGPP (965 aa)) is disordered. Pro-15, Pro-18, Pro-20, Pro-29, Pro-32, Pro-35, Pro-49, Pro-64, Pro-70, Pro-79, and Pro-85 each carry 4-hydroxyproline. Positions 52-66 (NGDDGEAGKPGRPGE) are enriched in basic and acidic residues. A 5-hydroxylysine; alternate modification is found at Lys-88. Residue Lys-88 is glycosylated (O-linked (Gal...) hydroxylysine; alternate). Position 94 is a phosphoserine (Ser-94). Low complexity predominate over residues 102 to 118 (DAGPAGPKGEPGSPGEN). 4-hydroxyproline is present on residues Pro-112, Pro-115, Pro-121, Pro-130, Pro-136, Pro-157, Pro-166, Pro-169, Pro-196, Pro-199, Pro-211, Pro-217, Pro-226, Pro-232, Pro-235, and Pro-250. The segment covering 136–154 (PGASGPAGARGNDGATGAA) has biased composition (low complexity). Pro residues predominate over residues 156-168 (PPGPTGPAGPPGF). Residues 202 to 241 (AGAAGPAGNPGADGQPGAKGANGAPGIAGAPGFPGARGPS) are compositionally biased toward low complexity. A 5-hydroxylysine modification is found at Lys-253. A 4-hydroxyproline mark is found at Pro-259, Pro-262, Pro-273, Pro-282, Pro-297, Pro-303, Pro-312, and Pro-318. Residues 307-327 (GERGGPGSRGFPGADGAGPKG) show a composition bias toward gly residues. Position 326 is a 5-hydroxylysine (Lys-326). A 4-hydroxyproline mark is found at Pro-335, Pro-344, Pro-350, Pro-356, Pro-365, Pro-368, Pro-377, Pro-386, Pro-392, Pro-404, Pro-413, Pro-422, Pro-425, Pro-443, Pro-460, Pro-466, Pro-472, Pro-480, Pro-492, Pro-501, Pro-509, Pro-515, and Pro-524. Positions 359–385 (KGLTGSPGSPGPDGKTGPPGPAGQDGR) are enriched in low complexity. Residues 394 to 413 (ARGQAGVMGFPGPKGAAGEP) show a composition bias toward low complexity. Residues 472–482 (PGEADLGAPGP) show a composition bias toward low complexity. The residue at position 536 (Lys-536) is a 5-hydroxylysine. Pro-542, Pro-557, and Pro-563 each carry 4-hydroxyproline. Positions 569–583 (SGPSGPAGPTGARGA) are enriched in low complexity. Ser-572 is modified (phosphoserine). Residues Pro-584, Pro-590, Pro-593, Pro-602, Pro-608, Pro-626, Pro-635, and Pro-644 each carry the 4-hydroxyproline modification. Positions 596–623 (AGFAGPPGADGQPGAKGEPGDAGAKGDA) are enriched in low complexity. The span at 625–637 (PPGPAGPTGPPGP) shows a compositional bias: pro residues. Position 647 is a 5-hydroxylysine (Lys-647). Residues 652 to 668 (SAGPPGATGFPGAAGRV) are compositionally biased toward low complexity. Residues Pro-656 and Pro-662 each carry the 4-hydroxyproline modification. Pro-670 is modified (3-hydroxyproline). Pro-671, Pro-680, Pro-683, Pro-704, Pro-713, Pro-721, Pro-730, Pro-748, Pro-757, Pro-760, Pro-766, Pro-771, Pro-777, Pro-783, Pro-791, and Pro-797 each carry 4-hydroxyproline. Low complexity predominate over residues 697–706 (ETGPAGRPGE). Residues 718 to 730 (KGSPGADGPAGAP) are compositionally biased toward low complexity. Residues 768–780 (KGPPGPMGPPGLA) show a composition bias toward pro residues. A 5-hydroxylysine modification is found at Lys-806. Residues 815–830 (SGPPGAPGAPGAPGPV) are compositionally biased toward pro residues. 3 positions are modified to 4-hydroxyproline: Pro-818, Pro-821, and Pro-824. Low complexity predominate over residues 851 to 865 (AGPAGARGPAGPQGP). Positions 866–880 (RGDKGETGEQGDRGI) are enriched in basic and acidic residues. Position 869 is a 5-hydroxylysine (Lys-869). Residue Lys-881 is modified to 5-hydroxylysine; alternate. A glycan (O-linked (Gal...) hydroxylysine; alternate) is linked at Lys-881. Residues Pro-896, Pro-899, Pro-917, and Pro-932 each carry the 4-hydroxyproline modification. Over residues 899–932 (PGEQGPSGASGPAGPRGPPGSAGSPGKDGLNGLP) the composition is skewed to low complexity. 3-hydroxyproline is present on Pro-937. Pro-938 bears the 4-hydroxyproline mark. Pro residues predominate over residues 950–965 (VGPPGPPGPPGPPGPP). Residue Pro-952 is modified to 3-hydroxyproline. A 4-hydroxyproline modification is found at Pro-953. Residue Pro-955 is modified to 3-hydroxyproline. The residue at position 956 (Pro-956) is a 4-hydroxyproline. Pro-958 carries the 3-hydroxyproline modification. 3 positions are modified to 4-hydroxyproline: Pro-959, Pro-962, and Pro-965.

It belongs to the fibrillar collagen family. As to quaternary structure, trimers of one alpha 2(I) and two alpha 1(I) chains. Post-translationally, contains mostly 4-hydroxyproline. Proline residues at the third position of the tripeptide repeating unit (G-X-Y) are hydroxylated in some or all of the chains. In terms of processing, contains 3-hydroxyproline at a few sites. This modification occurs on the first proline residue in the sequence motif Gly-Pro-Hyp, where Hyp is 4-hydroxyproline. Lysine residues at the third position of the tripeptide repeating unit (G-X-Y) are 5-hydroxylated in some or all of the chains. Post-translationally, O-glycosylated on hydroxylated lysine residues. The O-linked glycan consists of a Glc-Gal disaccharide. Expressed in bones.

The protein localises to the secreted. The protein resides in the extracellular space. Its subcellular location is the extracellular matrix. Functionally, type I collagen is a member of group I collagen (fibrillar forming collagen). This is Collagen alpha-1(I) chain from Scelidotherium sp. (strain SLP-2019) (South American ground sloth).